Reading from the N-terminus, the 40-residue chain is Trypsin inhibitor (40 aa).

Monomer.

It catalyses the reaction Preferential cleavage: Arg-|-Xaa, Lys-|-Xaa.. Functionally, inhibits trypsin but not chymotrypsin, papain or porcine pancreatic alpha-amylase. Has insecticidal activity against A.aegypti. Functions by inhibiting the A.aegypti midgut proteases to reduce the survival of larva and adults. In Cassia leiandra (Marimari), this protein is Trypsin inhibitor.